The chain runs to 283 residues: Pantothenate synthetase (283 aa).

26–33 (MGNLHEGH) is an ATP binding site. The Proton donor role is filled by H33. Residue Q57 coordinates (R)-pantoate. Q57 contributes to the beta-alanine binding site. 148 to 151 (GKKD) contributes to the ATP binding site. (R)-pantoate is bound at residue Q154. 185–188 (LSSR) serves as a coordination point for ATP.

Belongs to the pantothenate synthetase family. In terms of assembly, homodimer.

Its subcellular location is the cytoplasm. The enzyme catalyses (R)-pantoate + beta-alanine + ATP = (R)-pantothenate + AMP + diphosphate + H(+). Its pathway is cofactor biosynthesis; (R)-pantothenate biosynthesis; (R)-pantothenate from (R)-pantoate and beta-alanine: step 1/1. Its function is as follows. Catalyzes the condensation of pantoate with beta-alanine in an ATP-dependent reaction via a pantoyl-adenylate intermediate. The sequence is that of Pantothenate synthetase from Polaromonas naphthalenivorans (strain CJ2).